The chain runs to 136 residues: Small ribosomal subunit protein uS8 (136 aa).

It belongs to the universal ribosomal protein uS8 family. In terms of assembly, part of the 30S ribosomal subunit. Contacts proteins S5 and S12.

Functionally, one of the primary rRNA binding proteins, it binds directly to 16S rRNA central domain where it helps coordinate assembly of the platform of the 30S subunit. The chain is Small ribosomal subunit protein uS8 from Synechococcus sp. (strain JA-2-3B'a(2-13)) (Cyanobacteria bacterium Yellowstone B-Prime).